The primary structure comprises 2214 residues: MATIAPTAPITPPMESTGDRLVTLELKDGTVLQGYSFGAEKSVAGELVFQTGMVGYPESVTDPSYEGQILVITYPLVGNYGVPDMHLRDELVEELPRYFESNRIHIAGLVISHYTDEYSHYLAKSSLGKWLQNEGIPAVYGVDTRSLTKHLRDAGSMLGRLSLEKSGSDRTISRSSSWRSAFDVPEWVDPNVQNLVSKVSINEPKLYVPPADNKHIELQTGPDGKVLRILAIDVGMKYNQIRCFIKRGVELKVVPWNYDFTKEDYDGLFISNGPGDPSVLDDLSQRLSNVLEAKKTPVFGICLGHQLIARAAGASTLKLKFGNRGHNIPCTSTISGRCYITSQNHGFAVDVDTLTSGWKPLFVNANDDSNEGIYHSELPYFSVQFHPESTPGPRDTEFLFDVFIQAVKEFKYTQVLKPIAFPGGLLEDNVKAHPRIEAKKVLVLGSGGLSIGQAGEFDYSGSQAIKALKEEGIYTILINPNIATIQTSKGLADKVYFVPVTAEFVRKVILHERPDAIYVTFGGQTALSVGIAMKDEFEALGVKVLGTPIDTIITTEDRELFSNAIDEINEKCAKSQAANSVDEALAAVKEIGFPVIVRAAYALGGLGSGFANNEKELVDLCNVAFSSSPQVLVEKSMKGWKEVEYEVVRDAFDNCITVCNMENFDPLGIHTGDSIVVAPSQTLSDEDYNMLRTTAVNVIRHLGVVGECNIQYALNPVSKDYCIIEVNARLSRSSALASKATGYPLAYTAAKLGLNIPLNEVKNSVTKSTCACFEPSLDYCVVKMPRWDLKKFTRVSTELSSSMKSVGEVMSIGRTFEEAIQKAIRSTEYANLGFNETDLDIDIDYELNNPTDMRVFAIANAFAKKGYSVDKVWEMTRIDKWFLNKLHDLVQFAEKISSFGTKEELPSLVLRQAKQLGFDDRQIARFLDSNEVAIRRLRKEYGITPFVKQIDTVAAEFPAYTNYLYMTYNADSHDLSFDDHGVMVLGSGVYRIGSSVEFDWCAVTAVRTLRANNIKTIMVNYNPETVSTDYDEADRLYFETINLERVLDIYEIENSSGVVVSMGGQTSNNIAMTLHRENVKILGTSPDMIDSAENRYKFSRMLDQIGVDQPAWKELTSMDEAESFAEKVGYPVLVRPSYVLSGAAMNTVYSKNDLESYLNQAVEVSRDYPVVITKYIENAKEIEMDAVARNGELVMHVVSEHVENAGVHSGDATLIVPPQDLAPETVDRIVVATAKIGKALKITGPYNIQFIAKDNEIKVIECNVRASRSFPFISKVVGVNLIELATKAIMGLPLTPYPVEKLPDDYVAVKVPQFSFPRLAGADPVLGVEMASTGEVATFGHSKYEAYLKSLLATGFKLPKKNILLSIGSYKEKQELLSSVQKLYNMGYKLFATSGTADFLSEHGIAVQYLEVLNKDDDDQKSEYSLTQHLANNEIDLYINLPSANRFRRPASYVSKGYKTRRLAVDYSVPLVTNVKCAKLLIEAISRNITLDVSERDAQTSHRTITLPGLINIATYVPNASHVIKGPAELKETTRLFLESGFTYCQLMPRSISGPVITDVASLKAANSVSQDSSYTDFSFTIAGTAHNAHSVTQSASKVTALFLPLRELKNKITAVAELLNQWPTEKQVIAEAKTADLASVLLLTSLQNRSIHITGVSNKEDLALIMTVKAKDPRVTCDVNIYSLFIAQDDYPEAVFLPTKEDQEFFWNNLDSIDAFSVGALPVALANVTGNKVDVGMGIKDSLPLLLAAVEEGKLTIDDIVLRLHDNPAKIFNIPTQDSVVEIDLDYSFRRNKRWSPFNKDMNGGIERVVYNGETLVLSGELVSPGAKGKCIVNPSPASITASAELQSTSAKRRFSITEEAIADNLDAAEDAIPEQPLEQKLMSSRPPRELVAPGAIQNLIRSNNPFRGRHILSIKQFKRSDFHVLFAVAQELRAAVAREGVLDLMKGHVITTIFFEPSTRTCSSFIAAMERLGGRIVNVNPLVSSVKKGETLQDTIRTLACYSDAIVMRHSEEMSVHIAAKYSPVPIINGGNGSREHPTQAFLDLFTIREEIGTVNGITVTFMGDLKHGRTVHSLCRLLMHYQVRINLVSPPELRLPEGLREELRKAGLLGVESIELTPHIISKTDVLYCTRVQEERFNSPEEYARLKDTYIVDNKILAHAKENMAIMHPLPRVNEIKEEVDYDHRAAYFRQMKYGLFVRMALLAMVMGVDM.

Ala2 is subject to N-acetylalanine. The GATase (Glutamine amidotransferase) stretch occupies residues 2 to 400 (ATIAPTAPIT…PGPRDTEFLF (399 aa)). Residues Ser64, Gly273, and Gly275 each coordinate L-glutamine. The 186-residue stretch at 228-413 (RILAIDVGMK…IQAVKEFKYT (186 aa)) folds into the Glutamine amidotransferase type-1 domain. Residue Cys302 is the Nucleophile; for GATase activity of the active site. 5 residues coordinate L-glutamine: Leu303, Gln306, Asn344, Gly346, and Phe347. Catalysis depends on for GATase activity residues His386 and Glu388. The interval 401 to 440 (DVFIQAVKEFKYTQVLKPIAFPGGLLEDNVKAHPRIEAKK) is linker. A CPSase A region spans residues 440–980 (KVLVLGSGGL…DSHDLSFDDH (541 aa)). The tract at residues 440-1482 (KVLVLGSGGL…TNVKCAKLLI (1043 aa)) is CPSase (Carbamoyl phosphate synthase). Arg558, Arg598, Gly604, Gly605, Lys635, Met637, Glu642, Gly668, Ile669, His670, Gln711, and Glu725 together coordinate ATP. 2 ATP-grasp domains span residues 562–754 (SNAI…KLGL) and 1099–1290 (SRML…KAIM). Mg(2+) is bound by residues Gln711, Glu725, and Asn727. Residues Gln711, Glu725, and Asn727 each coordinate Mn(2+). Residues 981-1482 (GVMVLGSGVY…TNVKCAKLLI (502 aa)) form a CPSase B region. Arg1135, Lys1174, Ile1176, Glu1181, Gly1206, Val1207, His1208, Ser1209, Gln1249, and Glu1261 together coordinate ATP. The Mg(2+) site is built by Gln1249, Glu1261, and Asn1263. Residues Gln1249, Glu1261, and Asn1263 each contribute to the Mn(2+) site. One can recognise an MGS-like domain in the interval 1356 to 1508 (FKLPKKNILL…QTSHRTITLP (153 aa)). Positions 1483-1492 (EAISRNITLD) are linker. Positions 1493–1821 (VSERDAQTSH…YNGETLVLSG (329 aa)) are defective DHOase domain. The segment at 1822–1909 (ELVSPGAKGK…NLIRSNNPFR (88 aa)) is linker. Lys1853 participates in a covalent cross-link: Glycyl lysine isopeptide (Lys-Gly) (interchain with G-Cter in ubiquitin). At Ser1857 the chain carries Phosphoserine; by PKA. Residues 1910–2214 (GRHILSIKQF…LLAMVMGVDM (305 aa)) are ATCase (Aspartate transcarbamylase). The carbamoyl phosphate site is built by Arg1962 and Thr1963. Lys1990 contributes to the L-aspartate binding site. Carbamoyl phosphate contacts are provided by Arg2011, His2039, and Gln2042. L-aspartate contacts are provided by Arg2072 and Arg2134. Carbamoyl phosphate-binding residues include Leu2173 and Pro2174.

This sequence in the N-terminal section; belongs to the CarA family. It in the 2nd section; belongs to the CarB family. The protein in the 3rd section; belongs to the metallo-dependent hydrolases superfamily. DHOase family. CAD subfamily. In the C-terminal section; belongs to the aspartate/ornithine carbamoyltransferase superfamily. ATCase family. The cofactor is Mg(2+). Mn(2+) is required as a cofactor.

Its subcellular location is the cytoplasm. The enzyme catalyses hydrogencarbonate + L-glutamine + 2 ATP + H2O = carbamoyl phosphate + L-glutamate + 2 ADP + phosphate + 2 H(+). It carries out the reaction L-glutamine + H2O = L-glutamate + NH4(+). The catalysed reaction is hydrogencarbonate + NH4(+) + 2 ATP = carbamoyl phosphate + 2 ADP + phosphate + 2 H(+). It catalyses the reaction carbamoyl phosphate + L-aspartate = N-carbamoyl-L-aspartate + phosphate + H(+). It participates in pyrimidine metabolism; UMP biosynthesis via de novo pathway; (S)-dihydroorotate from bicarbonate: step 1/3. Its pathway is pyrimidine metabolism; UMP biosynthesis via de novo pathway; (S)-dihydroorotate from bicarbonate: step 2/3. Both CPSase and ATCase activities are feedback inhibited by the end product UTP. In terms of biological role, multifunctional protein that encodes the first 2 enzymatic activities of the de novo pyrimidine pathway: carbamoylphosphate synthetase (CPSase; EC 6.3.5.5) and aspartate transcarbamylase (ATCase; EC 2.1.3.2). The CPSase-function is accomplished in 2 steps, by a glutamine-dependent amidotransferase activity (GATase) that binds and cleaves glutamine to produce ammonia, followed by an ammonium-dependent carbamoyl phosphate synthetase, which reacts with the ammonia, hydrogencarbonate and ATP to form carbamoyl phosphate. The endogenously produced carbamoyl phosphate is sequestered and channeled to the ATCase active site. ATCase then catalyzes the formation of carbamoyl-L-aspartate from L-aspartate and carbamoyl phosphate. This is Multifunctional protein URA2 (URA2) from Saccharomyces cerevisiae (strain ATCC 204508 / S288c) (Baker's yeast).